We begin with the raw amino-acid sequence, 78 residues long: Large ribosomal subunit protein bL31 (78 aa).

The protein belongs to the bacterial ribosomal protein bL31 family. Type A subfamily. Part of the 50S ribosomal subunit.

In terms of biological role, binds the 23S rRNA. The polypeptide is Large ribosomal subunit protein bL31 (rpmE) (Rickettsia felis (strain ATCC VR-1525 / URRWXCal2) (Rickettsia azadi)).